A 66-amino-acid polypeptide reads, in one-letter code: Conotoxin Lt5.6 (66 aa).

Residues 1 to 19 form the signal peptide; the sequence is MLCLPVFIILLLLASPAAP. Residues 20–54 constitute a propeptide that is removed on maturation; sequence KSLETRIQNDLIRAGLTDADLKTEKGFLSGLLNVA.

The protein belongs to the conotoxin T superfamily. Post-translationally, contains 2 disulfide bonds that can be either 'C1-C3, C2-C4' or 'C1-C4, C2-C3', since these disulfide connectivities have been observed for conotoxins with cysteine framework V (for examples, see AC P0DQQ7 and AC P81755). Expressed by the venom duct.

Its subcellular location is the secreted. The sequence is that of Conotoxin Lt5.6 from Conus litteratus (Lettered cone).